Reading from the N-terminus, the 861-residue chain is Extra-large guanine nucleotide-binding protein 2 (861 aa).

Disordered stretches follow at residues 1 to 32 (MAAV…TSSG) and 121 to 168 (VSGS…DDRV). A compositionally biased stretch (basic and acidic residues) spans 131–143 (KRLDVPEEVKSPA). Positions 146-156 (RLSPSSPLSAS) are enriched in low complexity. Residues 157 to 168 (AREEDHLDDDRV) show a composition bias toward basic and acidic residues. Positions 204-211 (RAERKGKR) match the Nuclear localization signal motif. The RING-type; degenerate zinc finger occupies 214–257 (CYRCQLGNRFTEKEVCIVCDAKYCFNCVRRAMGAMPEGRKCQAC). Residues 461 to 853 (MLNKLLLIGS…TSMFQEMSTT (393 aa)) enclose the G-alpha domain. A G1 motif region spans residues 464 to 477 (KLLLIGSEKGGATT). GTP is bound at residue 469 to 477 (GSEKGGATT). Residue Thr476 coordinates Ca(2+). The segment at 523 to 545 (EMSNDQSSGNVGDETSAKPGNSI) is disordered. 624–632 (DILQAEGLS) is a binding site for GTP. The G2 motif stretch occupies residues 624–632 (DILQAEGLS). Residue Ser632 coordinates Ca(2+). A G3 motif region spans residues 665–674 (YQLIRLNPRS). Residues 737–744 (LLVLTKFD) are G4 motif. Residue 741–744 (TKFD) participates in GTP binding. The tract at residues 818–823 (QVSLES) is G5 motif.

Belongs to the G-alpha family. XLG subfamily. In terms of assembly, interacts with GB1. Component of a G-protein complex at least composed of XLG2 and GB1. Interacts with RTV1. Requires Ca(2+) as cofactor. Ubiquitous. Strongly expressed in vascular tissues, root and shoot meristems and lateral root primordia.

It localises to the nucleus. Guanine nucleotide-binding proteins (G proteins) are involved as modulators or transducers in various transmembrane signaling systems. Binds GTP with specificity. Plays a role in the root morphogenesis by regulation of the cell proliferation. Acts as a positive regulator in resistance to pathogen that triggers the salicylic acid (SA) pathway. Promotes the DNA binding activity of RTV1 specifically to promoter regions of FT and SOC1 in vivo leading to the activation of floral integrator genes. This is Extra-large guanine nucleotide-binding protein 2 (XLG2) from Arabidopsis thaliana (Mouse-ear cress).